The primary structure comprises 337 residues: S-adenosylmethionine:tRNA ribosyltransferase-isomerase (337 aa).

The protein belongs to the QueA family. Monomer.

It is found in the cytoplasm. It catalyses the reaction 7-aminomethyl-7-carbaguanosine(34) in tRNA + S-adenosyl-L-methionine = epoxyqueuosine(34) in tRNA + adenine + L-methionine + 2 H(+). It functions in the pathway tRNA modification; tRNA-queuosine biosynthesis. Its function is as follows. Transfers and isomerizes the ribose moiety from AdoMet to the 7-aminomethyl group of 7-deazaguanine (preQ1-tRNA) to give epoxyqueuosine (oQ-tRNA). The protein is S-adenosylmethionine:tRNA ribosyltransferase-isomerase of Legionella pneumophila (strain Lens).